Reading from the N-terminus, the 209-residue chain is LexA repressor (209 aa).

Residues 30–50 constitute a DNA-binding region (H-T-H motif); sequence RVEIAREIGFKSPNAAEEHLK. Residues Ser-126 and Lys-163 each act as for autocatalytic cleavage activity in the active site.

The protein belongs to the peptidase S24 family. Homodimer.

It catalyses the reaction Hydrolysis of Ala-|-Gly bond in repressor LexA.. In terms of biological role, represses a number of genes involved in the response to DNA damage (SOS response), including recA and lexA. In the presence of single-stranded DNA, RecA interacts with LexA causing an autocatalytic cleavage which disrupts the DNA-binding part of LexA, leading to derepression of the SOS regulon and eventually DNA repair. This is LexA repressor from Glaesserella parasuis serovar 5 (strain SH0165) (Haemophilus parasuis).